The chain runs to 205 residues: MRYTSAAIETLIEEFAKLPGIGRKTAQRLAMHILHEPKSGAERLAGALIDIKEKVIRCSVCQNVTDRDADPCYICSSTGRDRSVICVVESPADVLAFEKTGHYKGQYHVLHGLVSPLDGIGPDDIRIHELLARLGERHEAVPVKEVVLALNPTVEGETTSLYITRLLKPFGISVTKIARGIPVGAELEFIDEATLSRAMEGRSAV.

The C4-type zinc-finger motif lies at 58–75 (CSVCQNVTDRDADPCYIC). A Toprim domain is found at 83-182 (SVICVVESPA…SVTKIARGIP (100 aa)).

Belongs to the RecR family.

Its function is as follows. May play a role in DNA repair. It seems to be involved in an RecBC-independent recombinational process of DNA repair. It may act with RecF and RecO. The protein is Recombination protein RecR of Chlorobium limicola (strain DSM 245 / NBRC 103803 / 6330).